A 573-amino-acid chain; its full sequence is Proline--tRNA ligase (573 aa).

It belongs to the class-II aminoacyl-tRNA synthetase family. ProS type 1 subfamily. As to quaternary structure, homodimer.

It localises to the cytoplasm. The enzyme catalyses tRNA(Pro) + L-proline + ATP = L-prolyl-tRNA(Pro) + AMP + diphosphate. In terms of biological role, catalyzes the attachment of proline to tRNA(Pro) in a two-step reaction: proline is first activated by ATP to form Pro-AMP and then transferred to the acceptor end of tRNA(Pro). As ProRS can inadvertently accommodate and process non-cognate amino acids such as alanine and cysteine, to avoid such errors it has two additional distinct editing activities against alanine. One activity is designated as 'pretransfer' editing and involves the tRNA(Pro)-independent hydrolysis of activated Ala-AMP. The other activity is designated 'posttransfer' editing and involves deacylation of mischarged Ala-tRNA(Pro). The misacylated Cys-tRNA(Pro) is not edited by ProRS. The protein is Proline--tRNA ligase of Cupriavidus necator (strain ATCC 17699 / DSM 428 / KCTC 22496 / NCIMB 10442 / H16 / Stanier 337) (Ralstonia eutropha).